A 311-amino-acid polypeptide reads, in one-letter code: Taste receptor type 2 member 40 (311 aa).

Topologically, residues M1–C9 are extracellular. Residues L10–V30 traverse the membrane as a helical segment. The Cytoplasmic segment spans residues S31–R55. Residues F56 to Y76 traverse the membrane as a helical segment. Residues Y77 to T87 are Extracellular-facing. Residues V88–C108 form a helical membrane-spanning segment. Residues V109–S128 are Cytoplasmic-facing. The chain crosses the membrane as a helical span at residues L129 to F149. Residues W150–N178 are Extracellular-facing. Residues L179–F199 traverse the membrane as a helical segment. The Cytoplasmic segment spans residues S200–K235. Residues T236–S256 traverse the membrane as a helical segment. The Extracellular segment spans residues D257 to E266. The chain crosses the membrane as a helical span at residues A267 to S287. The Cytoplasmic portion of the chain corresponds to N288–S311.

The protein belongs to the G-protein coupled receptor T2R family. Expressed in the oral cavity, as well as in the gastrointestinal tract, including in the upper palate, tongue, proventriculus, ventriculus, duodenum, jejunum, ileum, cecum and colon.

Its subcellular location is the cell membrane. In terms of biological role, bitter taste receptor. Binds quinine, dextromethorphan, diphenhydramine, diphenidol, chlorpheniramine, diphenidol, chloramphenicol, chloroquine and coumarin, this latter being a weak agonist, as well as epiquinidine, ethylhydrocupreine and quinidine. This Gallus gallus (Chicken) protein is Taste receptor type 2 member 40 (TAS2R40).